Reading from the N-terminus, the 503-residue chain is GTPase Obg (503 aa).

The region spanning 2-159 is the Obg domain; sequence PQFVDRVVLH…KDVILELKSM (158 aa). The OBG-type G domain occupies 160 to 340; that stretch reads ADVGLVGFPS…LKYALMDIVK (181 aa). Residues 166–173, 191–195, 212–215, 292–295, and 321–323 contribute to the GTP site; these read GFPSAGKS, FTTLV, DVPG, NKMD, and STV. 2 residues coordinate Mg(2+): Ser173 and Thr193. The 74-residue stretch at 371–444 folds into the OCT domain; sequence EFEVEADPSA…IGEITFEWDP (74 aa). Basic and acidic residues predominate over residues 457–476; the sequence is RGTDVRLEQNTRATPEERKR. A disordered region spans residues 457 to 503; that stretch reads RGTDVRLEQNTRATPEERKRASQARRGLIDENDFGDGEVAERERWQG.

Belongs to the TRAFAC class OBG-HflX-like GTPase superfamily. OBG GTPase family. Monomer. Requires Mg(2+) as cofactor.

The protein resides in the cytoplasm. An essential GTPase which binds GTP, GDP and possibly (p)ppGpp with moderate affinity, with high nucleotide exchange rates and a fairly low GTP hydrolysis rate. Plays a role in control of the cell cycle, stress response, ribosome biogenesis and in those bacteria that undergo differentiation, in morphogenesis control. The sequence is that of GTPase Obg from Corynebacterium jeikeium (strain K411).